We begin with the raw amino-acid sequence, 951 residues long: Valine--tRNA ligase (951 aa).

The 'HIGH' region motif lies at Pro42–His52. Positions Lys554–Ser558 match the 'KMSKS' region motif. Lys557 contacts ATP. Residues Ala880–Gln944 are a coiled coil.

This sequence belongs to the class-I aminoacyl-tRNA synthetase family. ValS type 1 subfamily. Monomer.

It is found in the cytoplasm. It carries out the reaction tRNA(Val) + L-valine + ATP = L-valyl-tRNA(Val) + AMP + diphosphate. In terms of biological role, catalyzes the attachment of valine to tRNA(Val). As ValRS can inadvertently accommodate and process structurally similar amino acids such as threonine, to avoid such errors, it has a 'posttransfer' editing activity that hydrolyzes mischarged Thr-tRNA(Val) in a tRNA-dependent manner. The sequence is that of Valine--tRNA ligase from Salmonella paratyphi A (strain ATCC 9150 / SARB42).